The sequence spans 362 residues: Histidinol-phosphate aminotransferase (362 aa).

Lysine 220 carries the N6-(pyridoxal phosphate)lysine modification.

It belongs to the class-II pyridoxal-phosphate-dependent aminotransferase family. Histidinol-phosphate aminotransferase subfamily. As to quaternary structure, homodimer. Pyridoxal 5'-phosphate is required as a cofactor.

It carries out the reaction L-histidinol phosphate + 2-oxoglutarate = 3-(imidazol-4-yl)-2-oxopropyl phosphate + L-glutamate. The protein operates within amino-acid biosynthesis; L-histidine biosynthesis; L-histidine from 5-phospho-alpha-D-ribose 1-diphosphate: step 7/9. The protein is Histidinol-phosphate aminotransferase of Rhodospirillum centenum (strain ATCC 51521 / SW).